A 240-amino-acid chain; its full sequence is Uridylate kinase (240 aa).

13 to 16 contacts ATP; sequence KLSG. The tract at residues 21–26 is involved in allosteric activation by GTP; the sequence is GEKGFG. Position 55 (G55) interacts with UMP. 2 residues coordinate ATP: G56 and R60. UMP contacts are provided by residues D75 and 136-143; that span reads IGNPYFST. ATP contacts are provided by N164, Y170, and D173.

Belongs to the UMP kinase family. Homohexamer.

It is found in the cytoplasm. It catalyses the reaction UMP + ATP = UDP + ADP. It functions in the pathway pyrimidine metabolism; CTP biosynthesis via de novo pathway; UDP from UMP (UMPK route): step 1/1. Its activity is regulated as follows. Allosterically activated by GTP. Inhibited by UTP. Catalyzes the reversible phosphorylation of UMP to UDP. The chain is Uridylate kinase from Staphylococcus aureus (strain USA300).